We begin with the raw amino-acid sequence, 176 residues long: Large ribosomal subunit protein bL17m (176 aa).

The transit peptide at 1–8 (MRLSLAAA) directs the protein to the mitochondrion.

Belongs to the bacterial ribosomal protein bL17 family. Component of the mitochondrial ribosome large subunit (39S) which comprises a 16S rRNA and about 50 distinct proteins.

The protein localises to the mitochondrion. The protein is Large ribosomal subunit protein bL17m (Mrpl17) of Rattus norvegicus (Rat).